Reading from the N-terminus, the 1122-residue chain is Protein CAF130 (1122 aa).

The disordered stretch occupies residues Met1–Asp24. Over residues Ala11 to Asp24 the composition is skewed to polar residues. Ser1042 is modified (phosphoserine).

As to quaternary structure, subunit of the 1.0 MDa CCR4-NOT core complex that contains CCR4, CAF1, NOT1, NOT2, NOT3, NOT4, NOT5, CAF40 and CAF130. In the complex interacts with NOT1. The core complex probably is part of a less characterized 1.9 MDa CCR4-NOT complex.

Its subcellular location is the cytoplasm. It is found in the nucleus. Functionally, acts as a component of the CCR4-NOT core complex, which in the nucleus seems to be a general transcription factor, and in the cytoplasm the major mRNA deadenylase involved in mRNA turnover. The protein is Protein CAF130 (CAF130) of Saccharomyces cerevisiae (strain ATCC 204508 / S288c) (Baker's yeast).